The chain runs to 251 residues: Membrane-anchored junction protein (251 aa).

Residues 1–227 lie on the Nuclear side of the membrane; it reads MSLKPFTYPF…HSNPPPLKEP (227 aa). The segment at 140–225 is disordered; the sequence is RKRKLMEEPS…LEHSNPPPLK (86 aa). Over residues 183 to 198 the composition is skewed to polar residues; it reads EDSQQDTPASDSTAVT. Residues 228 to 246 form a helical membrane-spanning segment; that stretch reads AARGFLGFLSALFPFRYFF. Residues 247 to 251 lie on the Perinuclear space side of the membrane; that stretch reads RKSTQ.

It belongs to the MAJIN family. Component of the MAJIN-TERB1-TERB2 complex, composed of MAJIN, TERB1 and TERB2.

It localises to the nucleus inner membrane. It is found in the chromosome. The protein resides in the telomere. Functionally, meiosis-specific telomere-associated protein involved in meiotic telomere attachment to the nucleus inner membrane, a crucial step for homologous pairing and synapsis. Component of the MAJIN-TERB1-TERB2 complex, which promotes telomere cap exchange by mediating attachment of telomeric DNA to the inner nuclear membrane and replacement of the protective cap of telomeric chromosomes: in early meiosis, the MAJIN-TERB1-TERB2 complex associates with telomeric DNA and the shelterin/telosome complex. During prophase, the complex matures and promotes release of the shelterin/telosome complex from telomeric DNA. In the complex, MAJIN acts as the anchoring subunit to the nucleus inner membrane. MAJIN shows DNA-binding activity, possibly for the stabilization of telomere attachment on the nucleus inner membrane. The protein is Membrane-anchored junction protein of Rattus norvegicus (Rat).